Here is a 224-residue protein sequence, read N- to C-terminus: MSIRDWPEAERPREKLLEQGAATLSDAELLAIFLRTGVTGCSAVELARRLLGEFGSLRALLESDLAAFCGHLGLGVAKYAQLQAVLEMGRRHLAERLRRDSVLESPQAVRDYLKARLRHEQHEVFACLFLDTRHRVLAFEVLFQGSIDGASVYPRQVVKRALAHNAAALILTHNHPSGDARPSLADRQLTARLKEALALIDVRVLDHFIIGDGEPLSLAEYGWM.

The 123-residue stretch at 102-224 folds into the MPN domain; it reads VLESPQAVRD…PLSLAEYGWM (123 aa). Positions 173, 175, and 186 each coordinate Zn(2+). Residues 173–186 carry the JAMM motif motif; it reads HNHPSGDARPSLAD.

The protein belongs to the UPF0758 family.

The sequence is that of UPF0758 protein PSPA7_6095 from Pseudomonas paraeruginosa (strain DSM 24068 / PA7) (Pseudomonas aeruginosa (strain PA7)).